The primary structure comprises 721 residues: Phosphoribosylformylglycinamidine synthase subunit PurL (721 aa).

His-47 is a catalytic residue. Positions 50 and 89 each coordinate ATP. Glu-91 is a Mg(2+) binding site. Residues 92 to 95 (SHNH) and Arg-114 each bind substrate. Residue His-93 is the Proton acceptor of the active site. Residue Asp-115 participates in Mg(2+) binding. Residue Gln-238 coordinates substrate. Residue Asp-266 participates in Mg(2+) binding. A substrate-binding site is contributed by 310-312 (ESQ). ATP contacts are provided by Asp-490 and Gly-527. Residue Asn-528 coordinates Mg(2+). A substrate-binding site is contributed by Ser-530.

The protein belongs to the FGAMS family. Monomer. Part of the FGAM synthase complex composed of 1 PurL, 1 PurQ and 2 PurS subunits.

Its subcellular location is the cytoplasm. The enzyme catalyses N(2)-formyl-N(1)-(5-phospho-beta-D-ribosyl)glycinamide + L-glutamine + ATP + H2O = 2-formamido-N(1)-(5-O-phospho-beta-D-ribosyl)acetamidine + L-glutamate + ADP + phosphate + H(+). Its pathway is purine metabolism; IMP biosynthesis via de novo pathway; 5-amino-1-(5-phospho-D-ribosyl)imidazole from N(2)-formyl-N(1)-(5-phospho-D-ribosyl)glycinamide: step 1/2. Part of the phosphoribosylformylglycinamidine synthase complex involved in the purines biosynthetic pathway. Catalyzes the ATP-dependent conversion of formylglycinamide ribonucleotide (FGAR) and glutamine to yield formylglycinamidine ribonucleotide (FGAM) and glutamate. The FGAM synthase complex is composed of three subunits. PurQ produces an ammonia molecule by converting glutamine to glutamate. PurL transfers the ammonia molecule to FGAR to form FGAM in an ATP-dependent manner. PurS interacts with PurQ and PurL and is thought to assist in the transfer of the ammonia molecule from PurQ to PurL. This Ruegeria sp. (strain TM1040) (Silicibacter sp.) protein is Phosphoribosylformylglycinamidine synthase subunit PurL.